We begin with the raw amino-acid sequence, 115 residues long: Phosphoribosyl-AMP cyclohydrolase (115 aa).

Position 80 (Asp-80) interacts with Mg(2+). Cys-81 lines the Zn(2+) pocket. Mg(2+) is bound by residues Asp-82 and Asp-84. Zn(2+) contacts are provided by Cys-97 and Cys-104.

It belongs to the PRA-CH family. In terms of assembly, homodimer. It depends on Mg(2+) as a cofactor. Zn(2+) is required as a cofactor.

The protein resides in the cytoplasm. It catalyses the reaction 1-(5-phospho-beta-D-ribosyl)-5'-AMP + H2O = 1-(5-phospho-beta-D-ribosyl)-5-[(5-phospho-beta-D-ribosylamino)methylideneamino]imidazole-4-carboxamide. The protein operates within amino-acid biosynthesis; L-histidine biosynthesis; L-histidine from 5-phospho-alpha-D-ribose 1-diphosphate: step 3/9. In terms of biological role, catalyzes the hydrolysis of the adenine ring of phosphoribosyl-AMP. This chain is Phosphoribosyl-AMP cyclohydrolase, found in Mycobacterium avium (strain 104).